A 275-amino-acid chain; its full sequence is MSSALAPVGIFDSGVGGLTVARAIIDQLPDEHIIYVGDTGHGPYGPLSIPEVRAHALAIGDDLVGRGVKALVIACNTASAACLRDARERYEVPVVEVILPAVRRAVATTRNGRIGVIGTQATINSHAYQDAFAAARDTEITAVACPRFVDFVERGVTSGRQVLGLAEGYLEPLQRAQVDTLVLGCTHYPLLSGLIQLAMGDNVTLVSSAEETAKEVLRVLTERDLLHPHPDDPRAAGPSRVFEATGDPEAFTRLAARFLGPAVSGVRPVHHVRID.

Residues 12–13 and 44–45 each bind substrate; these read DS and YG. Cysteine 75 (proton donor/acceptor) is an active-site residue. A substrate-binding site is contributed by 76–77; sequence NT. The active-site Proton donor/acceptor is the cysteine 185. 186–187 lines the substrate pocket; sequence TH.

This sequence belongs to the aspartate/glutamate racemases family.

It catalyses the reaction L-glutamate = D-glutamate. Its pathway is cell wall biogenesis; peptidoglycan biosynthesis. Its function is as follows. Provides the (R)-glutamate required for cell wall biosynthesis. The sequence is that of Glutamate racemase from Mycobacterium avium (strain 104).